The primary structure comprises 453 residues: Flap endonuclease 1 (453 aa).

The segment at 1–105 is N-domain; the sequence is MGIKGLTGLL…SVLAKRFARR (105 aa). Aspartate 34 lines the Mg(2+) pocket. Residues arginine 47 and arginine 71 each contribute to the DNA site. Aspartate 87, glutamate 159, glutamate 161, aspartate 180, and aspartate 182 together coordinate Mg(2+). The interval 123-254 is I-domain; it reads DVDKLARRQV…KTALKLMREH (132 aa). Residue glutamate 159 participates in DNA binding. DNA contacts are provided by glycine 232 and aspartate 234. Aspartate 234 provides a ligand contact to Mg(2+). Disordered regions lie at residues 273–336 and 409–453; these read EEIK…VASS and RLDG…KSKN. The segment covering 320–333 has biased composition (basic residues); sequence KSPKKKAPAKKKKV. The tract at residues 406 to 414 is interaction with PCNA; the sequence is QQGRLDGFF. Over residues 417–446 the composition is skewed to basic and acidic residues; that stretch reads KPKEPAAKDTGKGKGKATKGEKRKAEEKGS.

This sequence belongs to the XPG/RAD2 endonuclease family. FEN1 subfamily. As to quaternary structure, interacts with PCNA. Three molecules of FEN1 bind to one PCNA trimer with each molecule binding to one PCNA monomer. PCNA stimulates the nuclease activity without altering cleavage specificity. Mg(2+) is required as a cofactor. In terms of processing, phosphorylated. Phosphorylation upon DNA damage induces relocalization to the nuclear plasma.

Its subcellular location is the nucleus. The protein resides in the nucleolus. The protein localises to the nucleoplasm. It is found in the mitochondrion. In terms of biological role, structure-specific nuclease with 5'-flap endonuclease and 5'-3' exonuclease activities involved in DNA replication and repair. During DNA replication, cleaves the 5'-overhanging flap structure that is generated by displacement synthesis when DNA polymerase encounters the 5'-end of a downstream Okazaki fragment. It enters the flap from the 5'-end and then tracks to cleave the flap base, leaving a nick for ligation. Also involved in the long patch base excision repair (LP-BER) pathway, by cleaving within the apurinic/apyrimidinic (AP) site-terminated flap. Acts as a genome stabilization factor that prevents flaps from equilibrating into structures that lead to duplications and deletions. Also possesses 5'-3' exonuclease activity on nicked or gapped double-stranded DNA, and exhibits RNase H activity. Also involved in replication and repair of rDNA and in repairing mitochondrial DNA. The protein is Flap endonuclease 1 of Cryptococcus neoformans var. neoformans serotype D (strain B-3501A) (Filobasidiella neoformans).